We begin with the raw amino-acid sequence, 384 residues long: MSGSLMNLFSLCFKPFGHVCDNSEAGSGGGGGVSGGTGGEGKDGLLWFRDLGKYCGGDFSMAVIQANQVLEDQSQVESGNFGTFVGVYDGHGGPEAARYVCDHLFNHFREISAETQGVVTRETIERAFHATEEGFASIVSELWQEIPNLATVGTCCLVGVIYQNTLFVASLGDSRVVLGKKGNCGGLSAIQLSTEHNANNEDIRWELKDLHPDDPQIVVFRHGVWRVKGIIQVSRSIGDMYMKRPEFNKEPISQKFRIAEPMKRPLMSATPTILSHPLHPNDSFLIFASDGLWEHLTNEKAVEIVHNHPRAGSAKRLIKAALHEAARKREMRYSDLRKIDKKVRRHFHDDITVIVVFLNHDLISRGHINSTQDTTVSIRSALEH.

A PPM-type phosphatase domain is found at 58 to 358 (DFSMAVIQAN…DDITVIVVFL (301 aa)). 4 residues coordinate Mn(2+): Asp-89, Gly-90, Asp-290, and Asp-349.

Belongs to the PP2C family. The cofactor is Mg(2+). Mn(2+) serves as cofactor.

It carries out the reaction O-phospho-L-seryl-[protein] + H2O = L-seryl-[protein] + phosphate. The enzyme catalyses O-phospho-L-threonyl-[protein] + H2O = L-threonyl-[protein] + phosphate. Dephosphorylates and represses plasma membrane H(+)-ATPases (PM H(+)-ATPases, e.g. AHA1 and AHA2), thus influencing negatively plant growth and fitness. Promotes the apical hook maintenance of etiolated seedlings. The sequence is that of Probable protein phosphatase 2C 42 from Arabidopsis thaliana (Mouse-ear cress).